The following is a 216-amino-acid chain: Homeobox-leucine zipper protein ATHB-40 (216 aa).

The interval 28–52 (GEVKQPKRRRKKTKGSVASADGGNG) is disordered. A DNA-binding region (homeobox) is located at residues 52 to 111 (GLFRKRKLTDEQVNMLEMSFGDEHKLESERKDRLAAELGLDPRQVAVWFQNRRARWKNKR). Residues 112-140 (LEEEYNKLKNSHDNVVVDKCRLESEVIQL) form a leucine-zipper region.

Belongs to the HD-ZIP homeobox family. Class I subfamily. Expressed in roots, flowers and siliques.

It is found in the nucleus. Probable transcription factor. The protein is Homeobox-leucine zipper protein ATHB-40 (ATHB-40) of Arabidopsis thaliana (Mouse-ear cress).